Here is a 198-residue protein sequence, read N- to C-terminus: Beta-crystallin A1-1 (198 aa).

Residues 1–13 (MAQINPLPVPLGP) are N-terminal arm. Beta/gamma crystallin 'Greek key' domains lie at 14–53 (WKIT…KVEC) and 54–100 (GAWI…RPIC). A connecting peptide region spans residues 101 to 106 (SANHKE). 2 consecutive Beta/gamma crystallin 'Greek key' domains span residues 107–148 (SKLV…KVQC) and 149–197 (GAWV…RRIQ).

The protein belongs to the beta/gamma-crystallin family. Homo/heterodimer, or complexes of higher-order. The structure of beta-crystallin oligomers seems to be stabilized through interactions between the N-terminal arms. In terms of processing, the N-terminus is blocked.

Crystallins are the dominant structural components of the vertebrate eye lens. The polypeptide is Beta-crystallin A1-1 (Aquarana catesbeiana (American bullfrog)).